Consider the following 329-residue polypeptide: Malate dehydrogenase (329 aa).

11–17 (GAAGQIA) is an NAD(+) binding site. Substrate contacts are provided by arginine 92 and arginine 98. NAD(+) is bound by residues asparagine 105, glutamine 112, and 129–131 (VGN). The substrate site is built by asparagine 131 and arginine 162. The active-site Proton acceptor is histidine 187.

The protein belongs to the LDH/MDH superfamily. MDH type 2 family.

The enzyme catalyses (S)-malate + NAD(+) = oxaloacetate + NADH + H(+). Its function is as follows. Catalyzes the reversible oxidation of malate to oxaloacetate. This Akkermansia muciniphila (strain ATCC BAA-835 / DSM 22959 / JCM 33894 / BCRC 81048 / CCUG 64013 / CIP 107961 / Muc) protein is Malate dehydrogenase.